We begin with the raw amino-acid sequence, 290 residues long: Eukaryotic translation initiation factor 3 subunit F-2 (290 aa).

The MPN domain maps to 12 to 150; that stretch reads VRLQPLVLFQ…TRLYCGVTMG (139 aa).

This sequence belongs to the eIF-3 subunit F family. In terms of assembly, component of the eukaryotic translation initiation factor 3 (eIF-3) complex. The eIF-3 complex interacts with pix.

It localises to the cytoplasm. In terms of biological role, component of the eukaryotic translation initiation factor 3 (eIF-3) complex, which is involved in protein synthesis of a specialized repertoire of mRNAs and, together with other initiation factors, stimulates binding of mRNA and methionyl-tRNAi to the 40S ribosome. The eIF-3 complex specifically targets and initiates translation of a subset of mRNAs involved in cell proliferation. The sequence is that of Eukaryotic translation initiation factor 3 subunit F-2 from Drosophila virilis (Fruit fly).